The following is a 376-amino-acid chain: Putative cytosolic 5'-nucleotidase 3 (376 aa).

Catalysis depends on D119, which acts as the Nucleophile. Mg(2+) is bound by residues D119 and D121. The Proton donor role is filled by D121. Substrate is bound by residues E168, S189, 236-237, and K286; that span reads SA. D312 provides a ligand contact to Mg(2+).

This sequence belongs to the pyrimidine 5'-nucleotidase family.

The protein resides in the cytoplasm. The enzyme catalyses a ribonucleoside 5'-phosphate + H2O = a ribonucleoside + phosphate. This chain is Putative cytosolic 5'-nucleotidase 3, found in Caenorhabditis elegans.